The sequence spans 149 residues: MVALKRFRATGPSFADLVPYAGLVDNGVLLLKDGSLMAGWYFAGPDSDSATDFERNELSRQINAILSRLGTGWMIQVEAARIPTYDYPSEDRCHFPDAVTRAIDAERRAHFARERGHFESKHALILTYRPSEAKKTAAQQIHLLGRGEP.

This sequence belongs to the TrbE/VirB4 family.

This chain is Probable conjugal transfer protein TrbE part 1 (trbEA), found in Sinorhizobium fredii (strain NBRC 101917 / NGR234).